Consider the following 440-residue polypeptide: MKMHFCIPVSQQRSDALGGRYVLYSVHLDGFLFCRVRYSQLHGWNEQLRRVFGNCLPPFPPKYYLAMTTAMADERRDQLEQYLQNVTMDPNVLRSDVFVEFLKLAQLNTFDIATKKAYLDIFLPNEQSIRIEIITSDTAERVLEVVSHKIGLCRELLGYFGLFLIRFGKEGKLSVVKKLADFELPYVSLGSSEVENCKVGLRKWYMAPSLDSVLMDCRVAVDLLYMQAIQDIEKGWAKPTQAQRQKLEAFQKEDSQTKFLELAREVRHYGYLQLDPCTCDYPESGSGAVLSVGNNEISCCITLPDSQTQDIVFQMSRVKCWQVTFLGTLLDTDGPQRTLNQNLELRFQYSEDSCWQWFVIYTKQAFLLSSCLKKMISEKMVKLAAENTEMQIEVPEQSKSKKYHIQQSQQKDYSSFLSRKSKIKIAKDDCVFGNIKEEDL.

The PX domain occupies 1–109 (MKMHFCIPVS…EFLKLAQLNT (109 aa)).

It belongs to the sorting nexin family. Interacts with CCDC22, CCDC93, VPS26C and VPS35L, associates with the retriever and CCC complexes.

May be involved in protein trafficking. This Homo sapiens (Human) protein is Sorting nexin-31 (SNX31).